The following is a 376-amino-acid chain: Succinyl-diaminopimelate desuccinylase (376 aa).

A Zn(2+)-binding site is contributed by His67. The active site involves Asp69. Asp100 contributes to the Zn(2+) binding site. Residue Glu134 is the Proton acceptor of the active site. 3 residues coordinate Zn(2+): Glu135, Glu163, and His349.

The protein belongs to the peptidase M20A family. DapE subfamily. Homodimer. Requires Zn(2+) as cofactor. It depends on Co(2+) as a cofactor.

It catalyses the reaction N-succinyl-(2S,6S)-2,6-diaminopimelate + H2O = (2S,6S)-2,6-diaminopimelate + succinate. Its pathway is amino-acid biosynthesis; L-lysine biosynthesis via DAP pathway; LL-2,6-diaminopimelate from (S)-tetrahydrodipicolinate (succinylase route): step 3/3. Functionally, catalyzes the hydrolysis of N-succinyl-L,L-diaminopimelic acid (SDAP), forming succinate and LL-2,6-diaminopimelate (DAP), an intermediate involved in the bacterial biosynthesis of lysine and meso-diaminopimelic acid, an essential component of bacterial cell walls. The sequence is that of Succinyl-diaminopimelate desuccinylase from Proteus mirabilis (strain HI4320).